We begin with the raw amino-acid sequence, 513 residues long: Histidine ammonia-lyase (513 aa).

Residues 144 to 146 (ASG) constitute a cross-link (5-imidazolinone (Ala-Gly)). Ser-145 is modified (2,3-didehydroalanine (Ser)).

Belongs to the PAL/histidase family. Post-translationally, contains an active site 4-methylidene-imidazol-5-one (MIO), which is formed autocatalytically by cyclization and dehydration of residues Ala-Ser-Gly.

It localises to the cytoplasm. It catalyses the reaction L-histidine = trans-urocanate + NH4(+). It participates in amino-acid degradation; L-histidine degradation into L-glutamate; N-formimidoyl-L-glutamate from L-histidine: step 1/3. In Streptococcus pyogenes serotype M18 (strain MGAS8232), this protein is Histidine ammonia-lyase.